The following is a 232-amino-acid chain: RNA chaperone ProQ (232 aa).

The tract at residues 105–182 (EAKARVQAQR…REEQHTPVSD (78 aa)) is disordered. Positions 117 to 136 (QQAKKREAAAAAGEKEDAPR) are enriched in basic and acidic residues. Positions 137-146 (RERKPRPTTP) are enriched in basic residues. A compositionally biased stretch (basic and acidic residues) spans 147–177 (RRKEGAERKPRAQKPVEKAPKTVKAPREEQH).

The protein belongs to the ProQ family.

The protein localises to the cytoplasm. In terms of biological role, RNA chaperone with significant RNA binding, RNA strand exchange and RNA duplexing activities. May regulate ProP activity through an RNA-based, post-transcriptional mechanism. The protein is RNA chaperone ProQ of Escherichia coli (strain ATCC 8739 / DSM 1576 / NBRC 3972 / NCIMB 8545 / WDCM 00012 / Crooks).